The primary structure comprises 237 residues: Ras modification protein ERF4 (237 aa).

Belongs to the ERF4 family. Interacts with ERF2.

It localises to the endoplasmic reticulum membrane. Its function is as follows. The ERF2-SHR5 complex is a palmitoyltransferase specific for Ras proteins. Palmitoylates RAS2, which is required for its proper plasma membrane localization. The polypeptide is Ras modification protein ERF4 (SHR5) (Saccharomyces cerevisiae (strain ATCC 204508 / S288c) (Baker's yeast)).